Here is a 447-residue protein sequence, read N- to C-terminus: Clusterin (447 aa).

The first 22 residues, 1 to 22 (MKTLLLCVGLLLSWERGQVLGD), serve as a signal peptide directing secretion. Residues 77–80 (KKNK) carry the Nuclear localization signal motif. N-linked (GlcNAc...) asparagine glycosylation is found at asparagine 85 and asparagine 102. Intrachain disulfides connect cysteine 101–cysteine 311, cysteine 112–cysteine 303, cysteine 115–cysteine 300, cysteine 120–cysteine 293, and cysteine 128–cysteine 283. A Phosphoserine modification is found at serine 132. Asparagine 144, asparagine 289, asparagine 326, asparagine 352, and asparagine 372 each carry an N-linked (GlcNAc...) asparagine glycan. Position 394 is a phosphoserine (serine 394). A Nuclear localization signal motif is present at residues 441-445 (RKKKR).

It belongs to the clusterin family. Antiparallel disulfide-linked heterodimer of an alpha chain and a beta chain. Self-associates and forms higher oligomers. Interacts with a broad range of misfolded proteins, including APP, APOC2 and LYZ. Slightly acidic pH promotes interaction with misfolded proteins. Forms high-molecular weight oligomers upon interaction with misfolded proteins. Interacts with APOA1, LRP2, CLUAP1 and PON1. Interacts with the complement membrane attack complex. Interacts (via alpha chain) with XRCC6. Interacts with SYVN1, COMMD1, BTRC, CUL1 and with ubiquitin and SCF (SKP1-CUL1-F-box protein) E3 ubiquitin-protein ligase complexes. Interacts (via alpha chain) with BAX in stressed cells, where BAX undergoes a conformation change leading to association with the mitochondrial membrane. Does not interact with BAX in unstressed cells. Found in a complex with LTF, CLU, EPPIN and SEMG1. Interacts (immaturely glycosylated pre-secreted form) with HSPA5; this interaction promotes CLU stability and facilitates stress-induced CLU retrotranslocation from the secretory pathway to the mitochondria, thereby reducing stress-induced apoptosis by stabilizing mitochondrial membrane integrity. Interacts with BCL2L1; this interaction releases and activates BAX and promotes cell death. Interacts with TGFBR2 and ACVR1. Interacts (secreted form) with STMN3; this interaction may act as an important modulator during neuronal differentiation. Interacts with VLDLR and LRP8. In terms of processing, proteolytically cleaved on its way through the secretory system, probably within the Golgi lumen. Proteolytic cleavage is not necessary for its chaperone activity. All non-secreted forms are not proteolytically cleaved. Chaperone activity of uncleaved forms is dependent on a non-reducing environment. Post-translationally, polyubiquitinated, leading to proteasomal degradation. Under cellular stress, the intracellular level of cleaved form is reduced due to proteasomal degradation. Heavily N-glycosylated. About 30% of the protein mass is comprised of complex N-linked carbohydrate. Endoplasmic reticulum (ER) stress induces changes in glycosylation status and increases level of hypoglycosylated forms. Core carbohydrates are essential for chaperone activity. Non-secreted forms are hypoglycosylated or unglycosylated.

It localises to the secreted. The protein resides in the nucleus. It is found in the cytoplasm. Its subcellular location is the mitochondrion membrane. The protein localises to the cytosol. It localises to the microsome. The protein resides in the endoplasmic reticulum. It is found in the mitochondrion. Its subcellular location is the perinuclear region. The protein localises to the cytoplasmic vesicle. It localises to the secretory vesicle. The protein resides in the chromaffin granule. In terms of biological role, functions as extracellular chaperone that prevents aggregation of non native proteins. Prevents stress-induced aggregation of blood plasma proteins. Inhibits formation of amyloid fibrils by APP, APOC2, B2M, CALCA, CSN3, SNCA and aggregation-prone LYZ variants (in vitro). Does not require ATP. Maintains partially unfolded proteins in a state appropriate for subsequent refolding by other chaperones, such as HSPA8/HSC70. Does not refold proteins by itself. Binding to cell surface receptors triggers internalization of the chaperone-client complex and subsequent lysosomal or proteasomal degradation. When secreted, protects cells against apoptosis and against cytolysis by complement: inhibits assembly of the complement membrane attack complex (MAC) by preventing polymerization of C9 pore component of the MAC complex. Intracellular forms interact with ubiquitin and SCF (SKP1-CUL1-F-box protein) E3 ubiquitin-protein ligase complexes and promote the ubiquitination and subsequent proteasomal degradation of target proteins. Promotes proteasomal degradation of COMMD1 and IKBKB. Modulates NF-kappa-B transcriptional activity. Following stress, promotes apoptosis. Inhibits apoptosis when associated with the mitochondrial membrane by interference with BAX-dependent release of cytochrome c into the cytoplasm. Plays a role in the regulation of cell proliferation. An intracellular form suppresses stress-induced apoptosis by stabilizing mitochondrial membrane integrity through interaction with HSPA5. Secreted form does not affect caspase or BAX-mediated intrinsic apoptosis and TNF-induced NF-kappa-B-activity. Secreted form act as an important modulator during neuronal differentiation through interaction with STMN3. Plays a role in the clearance of immune complexes that arise during cell injury. The protein is Clusterin (CLU) of Oryctolagus cuniculus (Rabbit).